The chain runs to 490 residues: MGIKGLTKFLADNAPKSIQQQGIGSLLGKRVAIDASMWIYQFLAAIREGSQWGNLTNSSGESTSHINGMLSRTTRLLEAGIKPVFVFDGAPPEMKKDELTKRDERREKALAELEKAQEIGDEELIKKQSVRTIHVTKKQVEDVKKLLGFLGMPCIDAPSEAEAQCAELCKDGLVYGVVTEDADSLTFGTPIQIKQLNFSESSNKITDKSPSKQKNGMQIIKLSLILSELDINMDQFIDLCILSGCDYCGTIRGIGTSTAYKLLKKYHNIESILKNIDQTKNPIPGNFDFSKVRELFKNPLVSKNNQIKDLIKWSNPKYEELMEWLIKEQNFNEARVNSYCERIKKSKNKTSQTCLDGFFKTASNERKNTHETPSRPPLSEKQKSETRKEVDSSLSCDKKKVKIEETKIISEWGAPVSKNLSSQAEKDLAENSSEAPNQSSEIKVNKIEENKDSESSTVENTPSLQTKSPEPTMRPVKRKLNRLISESDED.

The segment at 1-106 (MGIKGLTKFL…DELTKRDERR (106 aa)) is N-domain. Asp-34 contributes to the Mg(2+) binding site. Residues Arg-47 and Arg-72 each contribute to the DNA site. Mg(2+) is bound by residues Asp-88, Glu-160, Glu-162, Asp-181, and Asp-183. The interval 124 to 266 (LIKKQSVRTI…STAYKLLKKY (143 aa)) is I-domain. Glu-160 provides a ligand contact to DNA. Gly-244 and Asp-246 together coordinate DNA. Asp-246 contributes to the Mg(2+) binding site. An interaction with PCNA region spans residues 351–359 (SQTCLDGFF). Disordered regions lie at residues 364 to 396 (NERK…SLSC) and 421 to 490 (SSQA…SDED). The segment covering 430–442 (ENSSEAPNQSSEI) has biased composition (polar residues). Residues 443–454 (KVNKIEENKDSE) are compositionally biased toward basic and acidic residues. Over residues 455 to 469 (SSTVENTPSLQTKSP) the composition is skewed to polar residues.

Belongs to the XPG/RAD2 endonuclease family. FEN1 subfamily. Interacts with PCNA. Three molecules of FEN1 bind to one PCNA trimer with each molecule binding to one PCNA monomer. PCNA stimulates the nuclease activity without altering cleavage specificity. It depends on Mg(2+) as a cofactor. In terms of processing, phosphorylated. Phosphorylation upon DNA damage induces relocalization to the nuclear plasma.

It localises to the nucleus. Its subcellular location is the nucleolus. The protein resides in the nucleoplasm. It is found in the mitochondrion. Functionally, structure-specific nuclease with 5'-flap endonuclease and 5'-3' exonuclease activities involved in DNA replication and repair. During DNA replication, cleaves the 5'-overhanging flap structure that is generated by displacement synthesis when DNA polymerase encounters the 5'-end of a downstream Okazaki fragment. It enters the flap from the 5'-end and then tracks to cleave the flap base, leaving a nick for ligation. Also involved in the long patch base excision repair (LP-BER) pathway, by cleaving within the apurinic/apyrimidinic (AP) site-terminated flap. Acts as a genome stabilization factor that prevents flaps from equilibrating into structures that lead to duplications and deletions. Also possesses 5'-3' exonuclease activity on nicked or gapped double-stranded DNA, and exhibits RNase H activity. Also involved in replication and repair of rDNA and in repairing mitochondrial DNA. This Cryptosporidium parvum (strain Iowa II) protein is Flap endonuclease 1.